We begin with the raw amino-acid sequence, 157 residues long: Large ribosomal subunit protein uL10 (157 aa).

The protein belongs to the universal ribosomal protein uL10 family. Part of the ribosomal stalk of the 50S ribosomal subunit. The N-terminus interacts with L11 and the large rRNA to form the base of the stalk. The C-terminus forms an elongated spine to which L12 dimers bind in a sequential fashion forming a multimeric L10(L12)X complex.

Its function is as follows. Forms part of the ribosomal stalk, playing a central role in the interaction of the ribosome with GTP-bound translation factors. The chain is Large ribosomal subunit protein uL10 from Campylobacter hominis (strain ATCC BAA-381 / DSM 21671 / CCUG 45161 / LMG 19568 / NCTC 13146 / CH001A).